A 337-amino-acid chain; its full sequence is tRNA N6-adenosine threonylcarbamoyltransferase (337 aa).

Residues histidine 111 and histidine 115 each contribute to the Fe cation site. Substrate is bound by residues 134–138 (LVSGG), aspartate 167, glycine 180, and asparagine 272. Position 300 (aspartate 300) interacts with Fe cation.

It belongs to the KAE1 / TsaD family. It depends on Fe(2+) as a cofactor.

It is found in the cytoplasm. The catalysed reaction is L-threonylcarbamoyladenylate + adenosine(37) in tRNA = N(6)-L-threonylcarbamoyladenosine(37) in tRNA + AMP + H(+). Its function is as follows. Required for the formation of a threonylcarbamoyl group on adenosine at position 37 (t(6)A37) in tRNAs that read codons beginning with adenine. Is involved in the transfer of the threonylcarbamoyl moiety of threonylcarbamoyl-AMP (TC-AMP) to the N6 group of A37, together with TsaE and TsaB. TsaD likely plays a direct catalytic role in this reaction. This is tRNA N6-adenosine threonylcarbamoyltransferase from Escherichia coli O139:H28 (strain E24377A / ETEC).